Consider the following 238-residue polypeptide: SPbeta prophage-derived uncharacterized protein YorM (238 aa).

The signal sequence occupies residues 1–37 (MFKKLIDKHKKYVYHRINKMALFATIGLLGVGLVYSA). The segment covering 111–121 (TKTKKVQKTNT) has biased composition (basic residues). Positions 111-132 (TKTKKVQKTNTKRNLDKAVSKS) are disordered.

The protein is SPbeta prophage-derived uncharacterized protein YorM (yorM) of Bacillus subtilis (strain 168).